Reading from the N-terminus, the 84-residue chain is MSCKKGARQRLYVSLWLFYILVFAAATEMDFYSSECHSHTYEIVLNSFSSIWLLINLFLLLCSFAIFLKYWCYKTFASETVKGY.

The first 26 residues, 1 to 26, serve as a signal peptide directing secretion; sequence MSCKKGARQRLYVSLWLFYILVFAAA. The Virion surface segment spans residues 27–45; sequence TEMDFYSSECHSHTYEIVL. Residues 46 to 66 form a helical membrane-spanning segment; sequence NSFSSIWLLINLFLLLCSFAI. Topologically, residues 67–84 are intravirion; it reads FLKYWCYKTFASETVKGY.

It belongs to the herpesviridae glycoprotein N family. In terms of assembly, interacts (via N-terminus) with gM (via N-terminus). The gM-gN heterodimer forms the gCII complex.

The protein resides in the virion membrane. It is found in the host membrane. Its subcellular location is the host Golgi apparatus. The protein localises to the host trans-Golgi network. In terms of biological role, envelope glycoprotein necessary for proper maturation of gM and modulation of its membrane fusion activity. Also plays a critical role in virion morphogenesis. This chain is Envelope glycoprotein N, found in Human herpesvirus 6B (strain Z29) (HHV-6 variant B).